The primary structure comprises 309 residues: 2-phospho-L-lactate transferase (309 aa).

2 residues coordinate 7,8-didemethyl-8-hydroxy-5-deazariboflavin: Asp-50 and Lys-89.

The protein belongs to the CofD family. As to quaternary structure, homodimer. Mg(2+) is required as a cofactor.

The catalysed reaction is (2S)-lactyl-2-diphospho-5'-guanosine + 7,8-didemethyl-8-hydroxy-5-deazariboflavin = oxidized coenzyme F420-0 + GMP + H(+). It functions in the pathway cofactor biosynthesis; coenzyme F420 biosynthesis. Functionally, catalyzes the transfer of the 2-phospholactate moiety from (2S)-lactyl-2-diphospho-5'-guanosine to 7,8-didemethyl-8-hydroxy-5-deazariboflavin (FO) with the formation of oxidized coenzyme F420-0 and GMP. This Methanococcus maripaludis (strain C6 / ATCC BAA-1332) protein is 2-phospho-L-lactate transferase.